Reading from the N-terminus, the 427-residue chain is MESLTLQPIARVDGTINLPGSKSVSNRALLLAALASGTTVLTNLLDSDDVRHMLNALSALGVSYTLSADRTRCEITGQGGVLHAEGALELFLGNAGTAMRPLAAALCLGANDIVLTGEPRMKERPIGHLVDALRQGGAKIDYLEQENYPPLRLRGGFSGGHVEVDGSVSSQFLTALLMTAPLAPQDTTIAIKGDLVSKPYIDITLNLMKTFGVEVENQNYQRFVVKGEQQYRSPGQYLVEGDASSASYFLAAGAIKGGTVKVTGIGRNSMQGDIRFADVLEKMGATITWGDDFIACTRGELNAVDMDMNHIPDAAMTIATAALFAKGTTTLRNIYNWRVKETDRLFAMATELRKVGAEVEEGHDFIRITPPAQLQFAEIGTYNDHRMAMCFSLVALSDTPVTILDPKCTAKTFPDYFEQLARISTPA.

3-phosphoshikimate is bound by residues K22, S23, and R27. K22 contributes to the phosphoenolpyruvate binding site. Residues G96 and R124 each coordinate phosphoenolpyruvate. Residues S169, S170, Q171, S197, D313, N336, and K340 each contribute to the 3-phosphoshikimate site. Q171 provides a ligand contact to phosphoenolpyruvate. Residue D313 is the Proton acceptor of the active site. Residues R344, R386, and K411 each coordinate phosphoenolpyruvate.

Belongs to the EPSP synthase family. As to quaternary structure, monomer.

It localises to the cytoplasm. The catalysed reaction is 3-phosphoshikimate + phosphoenolpyruvate = 5-O-(1-carboxyvinyl)-3-phosphoshikimate + phosphate. Its pathway is metabolic intermediate biosynthesis; chorismate biosynthesis; chorismate from D-erythrose 4-phosphate and phosphoenolpyruvate: step 6/7. Its function is as follows. Catalyzes the transfer of the enolpyruvyl moiety of phosphoenolpyruvate (PEP) to the 5-hydroxyl of shikimate-3-phosphate (S3P) to produce enolpyruvyl shikimate-3-phosphate and inorganic phosphate. In Citrobacter koseri (strain ATCC BAA-895 / CDC 4225-83 / SGSC4696), this protein is 3-phosphoshikimate 1-carboxyvinyltransferase.